We begin with the raw amino-acid sequence, 599 residues long: Crinkler effector protein 8 (599 aa).

The N-terminal stretch at 1 to 17 is a signal peptide; the sequence is MVTLFCAVVGVAGSTFP. The interval 18 to 52 is LQLFLAK domain; it reads VDINENKSVGHLKKAIKEEKMYQFPADELQLFLAK. N-linked (GlcNAc...) asparagine glycosylation occurs at N23. The tract at residues 53–109 is DWL domain; it reads AGGNAWLSSLTEDVKKLKKGEKTALVKSLTQEEKELQGEDPISECLEGMDPPKVKQI. Residues 110–116 carry the HVLVXXP motif motif; that stretch reads HVLVALP. A C-terminal D2 effector domain region spans residues 117–590; it reads PGTSSAPISD…EAAEQESQGK (474 aa). Phosphoserine is present on residues S249, S281, and S385. Residues 289-590 form the Protein kinase domain; it reads LSKKLVWSYG…EAAEQESQGK (302 aa). The Proton acceptor role is filled by D470. S474 and S587 each carry phosphoserine. Residues 577-599 form a disordered region; the sequence is RFEREAAEQESQGKGVRKKHRRA. The Host nuclear localization signal signature appears at 590-599; it reads KGVRKKHRRA.

The protein in the N-terminal section; belongs to the Crinkler effector family. It in the C-terminal section; belongs to the protein kinase superfamily. As to quaternary structure, dimerizes in host plants. Autophosphorylated at Ser-249, Ser-281, Ser-385, Ser-474 and Ser-587. Additional serines or threonines are also targeted for phosphorylation.

It localises to the secreted. Its subcellular location is the host nucleus. It catalyses the reaction L-seryl-[protein] + ATP = O-phospho-L-seryl-[protein] + ADP + H(+). The catalysed reaction is L-threonyl-[protein] + ATP = O-phospho-L-threonyl-[protein] + ADP + H(+). In terms of biological role, secreted effector that induces cell death when expressed in host plants. Acts as a kinase and is able to autophosphorylate, however its cell death inducing ability is not a direct result of its kinase activity, but rather a consequence of the phosphorylated state of the five identified serine residues in the CRN8 protein. In Phytophthora infestans (Potato late blight agent), this protein is Crinkler effector protein 8.